Reading from the N-terminus, the 444-residue chain is MSAPTQTTPVFKALTEASFSDSSLSEEAKQNALYWWNTSANDLARMLHQADYSEEVQRGFLSYYRDNICPRLGGKPDKDSADSGVGWDGNPLEYSFELKGSTKKKSVRFVVDLTELRPADHSNPLSMKHTQEMVDLLAEKTPNFDDTWYKVLKNWFVYAHLTPEEQTALIAKAGQQTSVIIGFDIYPKLTSPDQLPVMGKVYFPPCYVASDKGISRWQAVRQGIQSLPGVESFPNILSSTEIINDYLSEKPDSWQMGTRYLATDLVSPNKARFKVYMRCFDTSFEGIWDYYTLGGRIPNLDEDREKFRQLMDLVSGTTYAETRSKDDMQMGRFTSATGKLTAIYFNISPDNPYPAPKLCIYPSNFAKDDEVIAKGLDEWLEKYGWSDDTKSMEDQVKSVFDHRKLEETTGIFTFIGIGRKEDPTKKELSIQVYMTPELYRTPRY.

This sequence belongs to the tryptophan dimethylallyltransferase family.

It catalyses the reaction 2,3,4,7,9-pentahydroxy-6-methyl-1H-phenalen-1-one + dimethylallyl diphosphate = 2,4,7,9-tetrahydroxy-6-methyl-8-(2-methylbut-3-en-2-yl)-1-oxo-1H-phenalen-3-ol + diphosphate. Its pathway is secondary metabolite biosynthesis. Prenyltransferase; part of the gene cluster that mediates the biosynthesis of phenalenones such as herqueinone, compounds that have been reported to treat tumors, bacterial infections and/or mycoses, and rheumatic diseases. The non-reducing polyketide synthase phnA synthesizes the heptaketide backbone and cyclizes it into the angular, hemiketal-containing naphtho-gamma-pyrone prephenalenone. The product template (PT) domain of phnA catalyzes only the C4-C9 aldol condensation, which is unprecedented among known PT domains. The transformation of prephenalenone to phenalenones requires an FAD-dependent monooxygenase phnB, which catalyzes the C2 aromatic hydroxylation of prephenalenone and ring opening of the gamma-pyrone ring simultaneously. Subsequent intramolecular deprotonation of C3 phenolic oxygen accelerates phenalenone ring closure to yield the tricyclic phenalenone core with a C2 hydroxylation. The prenyltransferase phnF further catalyzes reverse C-prenylation of phenalenone by direct electrophilic substitution at C6, or possibly via first a forward O-prenylation of a neighboring phenol in phenalenone, followed by a Claisen rearrangement. The hydroalkoxylation enzyme phnH catalyzes the 5-exo-trig cyclization via acid catalysis after the spontaneous deprotonation of 7-OH, which leads to the formation of the dihydrobenzofuran atrovenetin. Atrovenetin is further converted to deoxyherqueinone by the O-methyltransferase phnC which can methylate C2-OH to stabilize the northern portion of the phenalenone core. Finally, the oxidoreductase phnG converts deoxyherqueinone to herqueinone via C6 hydroxylation. This Penicillium herquei protein is Prenyltransferase phnF.